Consider the following 320-residue polypeptide: Protein MRG1 (320 aa).

The disordered stretch occupies residues 1 to 28 (MGSSSKEETASDGDTASGGASPSNDGRL). Positions 12–24 (DGDTASGGASPSN) are enriched in polar residues. In terms of domain architecture, Tudor-knot spans 30 to 80 (SEGERVLAYHGPRVYGAKVQKVELRKKEWKYFVHYLGWNKNWDEWVSADRL). Over residues 93-104 (ALDKKQGVEKGT) the composition is skewed to basic and acidic residues. The segment at 93–147 (ALDKKQGVEKGTKSGRSAQTKTRSSADTKADKDDTKTNAAKGKKRKHESGNEKDN) is disordered. Residues 106-115 (SGRSAQTKTR) show a composition bias toward polar residues. The segment covering 116 to 128 (SSADTKADKDDTK) has biased composition (basic and acidic residues). Positions 150 to 318 (AEKLMKIQIP…KVSDGKGKGK (169 aa)) constitute an MRG domain.

As to quaternary structure, interacts with HAM1 and HAM2. Interacts (via MRG domain) with CO. Component of the NuA4 histone acetyltransferase complex. Ubiquitous. Mainly expressed in the vasculature of cotyledons and leaves, and in roots and inflorescences.

The protein resides in the nucleus. Functionally, chromatin remodeling factor. Acts as a 'reader' protein by binding to H3K36me3 and H3K36me3 to control histone H4 acetylation. Increases the transcriptional levels of the flowering time genes FLC and FT. Binds the chromatin at the FT promoter upon interaction with CO. This is Protein MRG1 from Arabidopsis thaliana (Mouse-ear cress).